The primary structure comprises 552 residues: Chaperonin GroEL 3 (552 aa).

ATP contacts are provided by residues 30-33, K51, 87-91, G415, and D495; these read TLGP and DGTTT.

It belongs to the chaperonin (HSP60) family. As to quaternary structure, forms a cylinder of 14 subunits composed of two heptameric rings stacked back-to-back. Interacts with the co-chaperonin GroES.

Its subcellular location is the cytoplasm. It catalyses the reaction ATP + H2O + a folded polypeptide = ADP + phosphate + an unfolded polypeptide.. Functionally, together with its co-chaperonin GroES, plays an essential role in assisting protein folding. The GroEL-GroES system forms a nano-cage that allows encapsulation of the non-native substrate proteins and provides a physical environment optimized to promote and accelerate protein folding. The polypeptide is Chaperonin GroEL 3 (Mesorhizobium japonicum (strain LMG 29417 / CECT 9101 / MAFF 303099) (Mesorhizobium loti (strain MAFF 303099))).